The following is a 280-amino-acid chain: 4-deoxy-L-threo-5-hexosulose-uronate ketol-isomerase (280 aa).

Zn(2+) is bound by residues His198, His200, Glu205, and His247.

It belongs to the KduI family. It depends on Zn(2+) as a cofactor.

The enzyme catalyses 5-dehydro-4-deoxy-D-glucuronate = 3-deoxy-D-glycero-2,5-hexodiulosonate. It participates in glycan metabolism; pectin degradation; 2-dehydro-3-deoxy-D-gluconate from pectin: step 4/5. In terms of biological role, catalyzes the isomerization of 5-dehydro-4-deoxy-D-glucuronate to 3-deoxy-D-glycero-2,5-hexodiulosonate. This Lachnospira eligens (strain ATCC 27750 / DSM 3376 / VPI C15-48 / C15-B4) (Eubacterium eligens) protein is 4-deoxy-L-threo-5-hexosulose-uronate ketol-isomerase.